A 359-amino-acid polypeptide reads, in one-letter code: tRNA N6-adenosine threonylcarbamoyltransferase (359 aa).

Positions 115 and 119 each coordinate Fe cation. Substrate contacts are provided by residues 137 to 141 (LVSGG), Asp-170, Gly-183, and Asn-283. Asp-311 contacts Fe cation. The interval 328 to 359 (APDSLDLAPRSRWPLDEKSAPLIGTGRRGAKA) is disordered.

The protein belongs to the KAE1 / TsaD family. Fe(2+) is required as a cofactor.

Its subcellular location is the cytoplasm. The catalysed reaction is L-threonylcarbamoyladenylate + adenosine(37) in tRNA = N(6)-L-threonylcarbamoyladenosine(37) in tRNA + AMP + H(+). Required for the formation of a threonylcarbamoyl group on adenosine at position 37 (t(6)A37) in tRNAs that read codons beginning with adenine. Is involved in the transfer of the threonylcarbamoyl moiety of threonylcarbamoyl-AMP (TC-AMP) to the N6 group of A37, together with TsaE and TsaB. TsaD likely plays a direct catalytic role in this reaction. The polypeptide is tRNA N6-adenosine threonylcarbamoyltransferase (Brucella anthropi (strain ATCC 49188 / DSM 6882 / CCUG 24695 / JCM 21032 / LMG 3331 / NBRC 15819 / NCTC 12168 / Alc 37) (Ochrobactrum anthropi)).